Reading from the N-terminus, the 322-residue chain is Nitrilase (322 aa).

Residues 5-283 (VRVGAVQSEP…EAILTADIDL (279 aa)) enclose the CN hydrolase domain. Glu-45 serves as the catalytic Proton acceptor. The active site involves Lys-127. Residue Cys-162 is the Nucleophile of the active site.

Belongs to the carbon-nitrogen hydrolase superfamily. Nitrilase family.

It catalyses the reaction a nitrile + 2 H2O = a carboxylate + NH4(+). In terms of biological role, nitrilase that hydrolyzes preferentially 4-cyanopyridine. This Talaromyces marneffei (strain ATCC 18224 / CBS 334.59 / QM 7333) (Penicillium marneffei) protein is Nitrilase.